Consider the following 321-residue polypeptide: Lipoyl synthase (321 aa).

The [4Fe-4S] cluster site is built by Cys68, Cys73, Cys79, Cys94, Cys98, Cys101, and Ser308. The Radical SAM core domain maps to 80 to 297 (FNHGTATFMI…KAAAMDMGFT (218 aa)).

The protein belongs to the radical SAM superfamily. Lipoyl synthase family. It depends on [4Fe-4S] cluster as a cofactor.

It localises to the cytoplasm. The enzyme catalyses [[Fe-S] cluster scaffold protein carrying a second [4Fe-4S](2+) cluster] + N(6)-octanoyl-L-lysyl-[protein] + 2 oxidized [2Fe-2S]-[ferredoxin] + 2 S-adenosyl-L-methionine + 4 H(+) = [[Fe-S] cluster scaffold protein] + N(6)-[(R)-dihydrolipoyl]-L-lysyl-[protein] + 4 Fe(3+) + 2 hydrogen sulfide + 2 5'-deoxyadenosine + 2 L-methionine + 2 reduced [2Fe-2S]-[ferredoxin]. It functions in the pathway protein modification; protein lipoylation via endogenous pathway; protein N(6)-(lipoyl)lysine from octanoyl-[acyl-carrier-protein]: step 2/2. In terms of biological role, catalyzes the radical-mediated insertion of two sulfur atoms into the C-6 and C-8 positions of the octanoyl moiety bound to the lipoyl domains of lipoate-dependent enzymes, thereby converting the octanoylated domains into lipoylated derivatives. The polypeptide is Lipoyl synthase (Erwinia tasmaniensis (strain DSM 17950 / CFBP 7177 / CIP 109463 / NCPPB 4357 / Et1/99)).